The sequence spans 296 residues: uncharacterized protein (296 aa).

Transmembrane regions (helical) follow at residues 82–102 (VVAP…WSVQ) and 117–137 (ISVL…SAIF).

It is found in the cell membrane. This is an uncharacterized protein from Sinorhizobium fredii (strain NBRC 101917 / NGR234).